The sequence spans 163 residues: 3-hydroxyacyl-[acyl-carrier-protein] dehydratase FabZ (163 aa).

H58 is an active-site residue.

The protein belongs to the thioester dehydratase family. FabZ subfamily.

The protein localises to the cytoplasm. The catalysed reaction is a (3R)-hydroxyacyl-[ACP] = a (2E)-enoyl-[ACP] + H2O. Functionally, involved in unsaturated fatty acids biosynthesis. Catalyzes the dehydration of short chain beta-hydroxyacyl-ACPs and long chain saturated and unsaturated beta-hydroxyacyl-ACPs. The sequence is that of 3-hydroxyacyl-[acyl-carrier-protein] dehydratase FabZ from Francisella tularensis subsp. tularensis (strain FSC 198).